The chain runs to 382 residues: Inactive serine protease 54 (382 aa).

The first 20 residues, 1-20 (MAELRGILLLLLYMSHSSSA), serve as a signal peptide directing secretion. Positions 29 to 258 (IVDQLHENLV…YSNWIIAKTR (230 aa)) constitute a Peptidase S1 domain. Asn-113 carries an N-linked (GlcNAc...) asparagine glycan. 3 disulfides stabilise this stretch: Cys-154/Cys-216, Cys-185/Cys-195, and Cys-206/Cys-237.

Belongs to the peptidase S1 family. Plasma kallikrein subfamily.

Its subcellular location is the secreted. The sequence is that of Inactive serine protease 54 (Prss54) from Rattus norvegicus (Rat).